Here is a 599-residue protein sequence, read N- to C-terminus: Elongation factor 4 (599 aa).

A tr-type G domain is found at 5 to 187 (SHIRNFSIIA…ALVNGIPAPV (183 aa)). GTP-binding positions include 17–22 (DHGKST) and 134–137 (NKMD).

It belongs to the TRAFAC class translation factor GTPase superfamily. Classic translation factor GTPase family. LepA subfamily.

The protein localises to the cell inner membrane. It catalyses the reaction GTP + H2O = GDP + phosphate + H(+). Required for accurate and efficient protein synthesis under certain stress conditions. May act as a fidelity factor of the translation reaction, by catalyzing a one-codon backward translocation of tRNAs on improperly translocated ribosomes. Back-translocation proceeds from a post-translocation (POST) complex to a pre-translocation (PRE) complex, thus giving elongation factor G a second chance to translocate the tRNAs correctly. Binds to ribosomes in a GTP-dependent manner. This Teredinibacter turnerae (strain ATCC 39867 / T7901) protein is Elongation factor 4.